The following is an 812-amino-acid chain: Fibrous sheath CABYR-binding protein (812 aa).

The segment at Met-1–Ala-66 is disordered. Ser-25, Ser-57, Ser-125, Ser-133, Ser-184, and Ser-273 each carry phosphoserine. 4 disordered regions span residues Ile-269 to Thr-333, Asp-367 to Ser-388, Phe-424 to Leu-547, and Pro-672 to Lys-741. A compositionally biased stretch (low complexity) spans Ala-275 to Lys-286. Residues Glu-488–Pro-501 are compositionally biased toward pro residues. Low complexity predominate over residues Val-502–Pro-513. Over residues Glu-514–Glu-528 the composition is skewed to acidic residues.

As to quaternary structure, interacts with CABYR.

The protein resides in the cell projection. The protein localises to the cilium. It is found in the flagellum. In terms of biological role, may be involved in the later stages of fibrous sheath biogenesis. Binds calcium. The protein is Fibrous sheath CABYR-binding protein of Rattus norvegicus (Rat).